Consider the following 589-residue polypeptide: Guanylate-binding protein 2 (589 aa).

A GTPase domain (Globular) region spans residues 1–309; it reads MASEIHMLQP…GAISSGSLPC (309 aa). The GB1/RHD3-type G domain occupies 35 to 276; sequence NQPVVVVAIV…FTSYIFSYSA (242 aa). Residues 45–52, 181–182, and Leu-245 contribute to the GTP site; these read GLYRTGKS and RD. Cys-586 bears the Cysteine methyl ester mark. Cys-586 carries the S-geranylgeranyl cysteine lipid modification. Positions 587-589 are cleaved as a propeptide — removed in mature form; that stretch reads TIL.

This sequence belongs to the TRAFAC class dynamin-like GTPase superfamily. GB1/RHD3 GTPase family. GB1 subfamily. Homodimer; homodimerization occurs upon GTP-binding and is required for the association with membranous structures. Heterodimer with other family members, including GBP1, GBP3, GBP4 and GBP5. Post-translationally, isoprenylation is required for proper subcellular location. Widely expressed.

The protein resides in the cytoplasmic vesicle membrane. The protein localises to the golgi apparatus membrane. It localises to the cytoplasm. It is found in the perinuclear region. It carries out the reaction GTP + H2O = GDP + phosphate + H(+). In terms of biological role, interferon (IFN)-inducible GTPase that plays important roles in innate immunity against a diverse range of bacterial, viral and protozoan pathogens. Hydrolyzes GTP to GMP in 2 consecutive cleavage reactions, but the major reaction product is GDP. Following infection, recruited to the pathogen-containing vacuoles or vacuole-escaped bacteria and acts as a positive regulator of inflammasome assembly by promoting the release of inflammasome ligands from bacteria. Acts by promoting lysis of pathogen-containing vacuoles, releasing pathogens into the cytosol. Following pathogen release in the cytosol, promotes recruitment of proteins that mediate bacterial cytolysis: this liberates ligands that are detected by inflammasomes, such as lipopolysaccharide (LPS) that activates the non-canonical CASP4/CASP11 inflammasome or double-stranded DNA (dsDNA) that activates the AIM2 inflammasome. Confers protection to the protozoan pathogen Toxoplasma gondii. Independently of its GTPase activity, acts as an inhibitor of various viruses infectivity by inhibiting FURIN-mediated maturation of viral envelope proteins. In Rattus norvegicus (Rat), this protein is Guanylate-binding protein 2 (Gbp2).